The primary structure comprises 593 residues: A-type ATP synthase subunit A (593 aa).

236–243 is a binding site for ATP; the sequence is GPFGSGKT.

This sequence belongs to the ATPase alpha/beta chains family. In terms of assembly, has multiple subunits with at least A(3), B(3), C, D, E, F, H, I and proteolipid K(x).

It localises to the cell membrane. The catalysed reaction is ATP + H2O + 4 H(+)(in) = ADP + phosphate + 5 H(+)(out). Functionally, component of the A-type ATP synthase that produces ATP from ADP in the presence of a proton gradient across the membrane. The A chain is the catalytic subunit. This Pyrobaculum islandicum (strain DSM 4184 / JCM 9189 / GEO3) protein is A-type ATP synthase subunit A.